The sequence spans 67 residues: Archaeal histone HAN1 subunit A (67 aa).

Interaction with DNA stretches follow at residues 20-22 (RVS) and 54-57 (KTVK).

It belongs to the archaeal histone HMF family. In terms of assembly, heterodimer. Dimers then assemble into higher oligomers, with the DNA wrapped around the protein core.

The protein resides in the cytoplasm. It is found in the chromosome. Functionally, binds and compact DNA (95 to 150 base pairs) to form nucleosome-like structures that contain positive DNA supercoils. Increases the resistance of DNA to thermal denaturation (in vitro). This chain is Archaeal histone HAN1 subunit A (han1A), found in Thermococcus zilligii.